Here is a 260-residue protein sequence, read N- to C-terminus: MALISMKNVTLKKQGKILLNNLNWKVKKGENWVILGLNGSGKTTLLKLIMAEYWSTQGQVEILNTRFGQGDIPNMRTKIGVVGSFIAERLPANMLAEKIVLTGKYKSSILYKEYDETELNEARQMLTVIGGKHLLGRIYSSLSQGEKQLLLIARSLMEDPEIIILDEATSGLDLFAREKLLTQVEKITELPHAPTILYVTHHAEEITDKMSHILLLRRGKIVAQGPKKDIITPQVLENFYESPVNIISIDDKRFFIKPQV.

An ABC transporter domain is found at 4 to 243 (ISMKNVTLKK…QVLENFYESP (240 aa)). 36 to 43 (GLNGSGKT) contributes to the ATP binding site.

Belongs to the ABC transporter superfamily.

This Streptococcus mutans serotype c (strain ATCC 700610 / UA159) protein is Putative ABC transporter ATP-binding protein (abcX).